Consider the following 170-residue polypeptide: CDP-archaeol synthase (170 aa).

A run of 5 helical transmembrane segments spans residues leucine 6–valine 26, glycine 53–proline 73, leucine 83–phenylalanine 103, proline 114–valine 134, and glycine 140–alanine 160.

This sequence belongs to the CDP-archaeol synthase family. The cofactor is Mg(2+).

The protein localises to the cell membrane. It catalyses the reaction 2,3-bis-O-(geranylgeranyl)-sn-glycerol 1-phosphate + CTP + H(+) = CDP-2,3-bis-O-(geranylgeranyl)-sn-glycerol + diphosphate. The protein operates within membrane lipid metabolism; glycerophospholipid metabolism. Functionally, catalyzes the formation of CDP-2,3-bis-(O-geranylgeranyl)-sn-glycerol (CDP-archaeol) from 2,3-bis-(O-geranylgeranyl)-sn-glycerol 1-phosphate (DGGGP) and CTP. This reaction is the third ether-bond-formation step in the biosynthesis of archaeal membrane lipids. This Thermococcus onnurineus (strain NA1) protein is CDP-archaeol synthase.